Here is a 1304-residue protein sequence, read N- to C-terminus: MSEKGRFSAGLSRQAADGNKADAPLPPVPFRNYQIGKKELRNLIAWSFARYGTARTAQMADALKTLGFKYATQAAVSISVEDLRVPPSKRQLLAQAEAEIEAATERYTRGEITEVERYQKVIDTWNQINDQIKEEMLNNFRQNDPLNSVYMMANSGARGNVSQVRQLVGMRGLMANPQGRIIDLPIKTNFREGLTVTEYIISSYGARKGLVDTALRTADSGYLTRRLVDVSQDVIVRESDCGTEQGILLEYLMDGDKVVVSLEERLVGRVLARDVVHPQTQEILARRNQEVDHDLARTIAEAGIRQVMVRSPLTCEANRSVCRMCYGWSLAHSRLVDLGEAVGIIAAQSIGEPGTQLTMRTFHTGGVFTGEVARQIRAPFAGVVRFPKNLRTRPFRTRHGDDALQVEVNNQIILEGPDGQRESFDMTQGSTLLVRDGAQVQRDQLIAEVSLAKASRKSTEKAQKEVVADLAGEIRFADLPIEEKTDRQGNTTYTAQRQGLIWVMSGQVYNLPPGAEPVVKNGDRVQAGDVIAETSLVTEHGGIVRLPERSDTRSGREVEIINASVVLREARVRVESHQGREQFLLDTSSGQTFVLKATPGTKVGNDEVVAELIDNHFRSQTGGLVKFAGIEVARRGKAKQGYEVIQGGTLLWIPEETHEVNKDISLLNVDDGQYVEAGTEVVKDIFCQNAGVVEVIQKNDILREIVIKPGSLHLVDNPADLEVKSGTLIQPGQPVLSSIVPDRLVYLEHVETPEGPGLLLRPVQEYEIPDRPLVPTQESTSESGRSIRLRAVQRVPFKDGERVKSVGPVELLRTQLVLEIDTDAPQLKADIELIQDEKDPDIRRLQLVILETLLLRRDVEADLTQGSTHTRLLVKEGDSIASGDVIARTEIQAKKAGIVQGIREGAEVVRRVLVITDDDLVQVPLTGPANVEVGALVRVGDELAPGIPSPQSGQVMQITDGQVLLRMARPYLVSAGAILQVRNGDLVQRGDSLALLVFERAKTGDIIQGLPRIEELLEARKPKEMCVLAKRPGTVQLSWRGEEPDLKVIEADGTVRDYSVLPGQSLIVVDGQPVGVGDPLTDGPANPHDLLEIYYEYHRQTLGDDQAARLALREVQRFFVNEVQNVYRSQGVEISDKHIEIVVRQMTSKVRVDDGGDTILLPGELVELREIQQINATMAITGGAPAKYTPVLLGITKASLNTDSFISAASFQETTRVLTEAAIEGKSDWLRGLKENVIIGRLIPAGTGFTTYEEIAAEPEPDEEEEEPAVLPELPPRLILEDDQLIDDSTPAFDELEEDDDEEE.

Residues 1–23 (MSEKGRFSAGLSRQAADGNKADA) are disordered. Positions 241, 315, 322, and 325 each coordinate Zn(2+). Positions 1256–1268 (AAEPEPDEEEEEP) are enriched in acidic residues. Positions 1256-1304 (AAEPEPDEEEEEPAVLPELPPRLILEDDQLIDDSTPAFDELEEDDDEEE) are disordered. Over residues 1269–1278 (AVLPELPPRL) the composition is skewed to low complexity. Positions 1294–1304 (DELEEDDDEEE) are enriched in acidic residues.

It belongs to the RNA polymerase beta' chain family. RpoC2 subfamily. In cyanobacteria the RNAP catalytic core is composed of 2 alpha, 1 beta, 1 beta', 1 gamma and 1 omega subunit. When a sigma factor is associated with the core the holoenzyme is formed, which can initiate transcription. Zn(2+) serves as cofactor.

The catalysed reaction is RNA(n) + a ribonucleoside 5'-triphosphate = RNA(n+1) + diphosphate. Functionally, DNA-dependent RNA polymerase catalyzes the transcription of DNA into RNA using the four ribonucleoside triphosphates as substrates. The chain is DNA-directed RNA polymerase subunit beta' from Synechococcus sp. (strain JA-2-3B'a(2-13)) (Cyanobacteria bacterium Yellowstone B-Prime).